Here is a 295-residue protein sequence, read N- to C-terminus: GTPase Era (295 aa).

An Era-type G domain is found at 7–176 (KTISVCIIGR…IKSKAKVSPW (170 aa)). The interval 15–22 (GRPNSGKS) is G1. Residue 15–22 (GRPNSGKS) coordinates GTP. A G2 region spans residues 41–45 (QTTRS). A G3 region spans residues 62–65 (DTPG). Residues 62-66 (DTPGI) and 124-127 (NKID) contribute to the GTP site. A G4 region spans residues 124–127 (NKID). The segment at 152–154 (ISA) is G5. Positions 204 to 281 (LQQELPYKLT…HLFLFVKVHA (78 aa)) constitute a KH type-2 domain.

It belongs to the TRAFAC class TrmE-Era-EngA-EngB-Septin-like GTPase superfamily. Era GTPase family. Monomer.

It localises to the cytoplasm. It is found in the cell inner membrane. Functionally, an essential GTPase that binds both GDP and GTP, with rapid nucleotide exchange. Plays a role in 16S rRNA processing and 30S ribosomal subunit biogenesis and possibly also in cell cycle regulation and energy metabolism. The sequence is that of GTPase Era from Rickettsia prowazekii (strain Madrid E).